The following is a 476-amino-acid chain: ATP sulfurylase 2 (476 aa).

The transit peptide at 1–56 (MSLMIRSSYVSHITLFQPRNSKPSSFTNQISFLSSSNNNPFLNLVYKRNLTMQSVS) directs the protein to the chloroplast.

Belongs to the sulfate adenylyltransferase family. In terms of assembly, homotetramer. As to expression, mostly expressed in leaves or cotyledons.

It localises to the plastid. The protein localises to the chloroplast. It is found in the cytoplasm. The enzyme catalyses sulfate + ATP + H(+) = adenosine 5'-phosphosulfate + diphosphate. Its pathway is sulfur metabolism; hydrogen sulfide biosynthesis; sulfite from sulfate: step 1/3. The sequence is that of ATP sulfurylase 2 (APS2) from Arabidopsis thaliana (Mouse-ear cress).